A 133-amino-acid polypeptide reads, in one-letter code: Agouti-signaling protein (133 aa).

Positions 1-22 (MDVSRLLLATLLVCLCFLTAYS) are cleaved as a signal peptide. Asn-39 carries N-linked (GlcNAc...) asparagine glycosylation. Residues 56–95 (NKKSKKISRNEAEKKKRPSKRKAPMKNVARTRPPPPTPCV) form a disordered region. Residues 70 to 79 (KKRPSKRKAP) are compositionally biased toward basic residues. Disulfide bonds link Cys-94-Cys-109, Cys-101-Cys-115, Cys-108-Cys-126, Cys-112-Cys-133, and Cys-117-Cys-124. The Agouti domain occupies 94-133 (CVATRDSCKPPAPACCDPCAFCQCRFFRSACSCRVLNPTC).

The protein localises to the secreted. Involved in the regulation of melanogenesis. The binding of ASP to MC1R precludes alpha-MSH initiated signaling and thus blocks production of cAMP, leading to a down-regulation of eumelanogenesis (brown/black pigment) and thus increasing synthesis of pheomelanin (yellow/red pigment). In Bos taurus (Bovine), this protein is Agouti-signaling protein (ASIP).